A 463-amino-acid chain; its full sequence is MKEKIGIVDTLEERKPYITRKQEKGQEIPLGCDNNSLAGAISQRACVYSGARVVLNPVTDAVHLVHGPIGCAGYTWDIRGAKSSGIETNRTSFSTDMKEIDVVFGGEKKLSNAIDELVEVYHPPVILVYSTCIVGIIGDDLESVCKTASQKHTIHVTPVKSEGFNGNKSDGYKAACDALKRLIKRPSEDEIKKKAPRVPETIKPKINILGDFNVAGDVWLVNPLFEQMGIEVIVSMTGDSTPKAISRAAEADLNLVQCSGSMTYLPKWMQAEYGIPYLNASFFGIEDISLALRRTADYFGSEEIKKRAEQILETEINRIMPEISRVREKVKGKKAAIYMGGPAKALTLIKGFDELGMEVVIIGTQTGKKEDYEQISYSVRDGTVIVDDANPLELAELLIRQKADLMVAGVKERFIAYKLGIAFCDFNHDRVVEFEGFDGFVNFAREVDASISSPVWKAVRQRI.

The protein belongs to the NifD/NifK/NifE/NifN family.

It participates in cofactor biosynthesis; Fe-Mo cofactor biosynthesis. In terms of biological role, this protein may play a role in the biosynthesis of the prosthetic group of nitrogenase (FeMo cofactor). This Methanosarcina barkeri protein is Nitrogenase iron-molybdenum cofactor biosynthesis protein NifE (nifE2).